The sequence spans 517 residues: GTPase Obg (517 aa).

The Obg domain maps to 2–159; sequence ATFVDTVTLH…GDVVLELKVV (158 aa). One can recognise an OBG-type G domain in the interval 160-336; the sequence is ADVALVGYPS…LSFALAELVK (177 aa). GTP-binding positions include 166–173, 191–195, 212–215, 288–291, and 317–319; these read GYPSAGKS, FTTLH, DVPG, NKID, and STV. S173 and T193 together coordinate Mg(2+). The OCT domain maps to 355-439; the sequence is PRAVDEKPFT…GDGVVFDWEP (85 aa). The interval 490-517 is disordered; sequence EGEAGLWADEDGTGQDGTDEDATTDAKA. Acidic residues predominate over residues 497 to 517; it reads ADEDGTGQDGTDEDATTDAKA.

It belongs to the TRAFAC class OBG-HflX-like GTPase superfamily. OBG GTPase family. As to quaternary structure, monomer. The cofactor is Mg(2+).

It localises to the cytoplasm. Functionally, an essential GTPase which binds GTP, GDP and possibly (p)ppGpp with moderate affinity, with high nucleotide exchange rates and a fairly low GTP hydrolysis rate. Plays a role in control of the cell cycle, stress response, ribosome biogenesis and in those bacteria that undergo differentiation, in morphogenesis control. The polypeptide is GTPase Obg (Clavibacter sepedonicus (Clavibacter michiganensis subsp. sepedonicus)).